The following is an 830-amino-acid chain: Ent-cassa-12,15-diene synthase (830 aa).

Residues Met1 to Asp50 are disordered. Residues Gly23 to Ser37 show a composition bias toward polar residues. Mg(2+) contacts are provided by Asp577, Asp581, Asn721, and Glu729. The DDXXD motif signature appears at Asp577–Asp581.

Belongs to the terpene synthase family. Mg(2+) is required as a cofactor. As to expression, expressed in roots and stems.

It catalyses the reaction ent-copalyl diphosphate = ent-cassa-12,15-diene + diphosphate. Its function is as follows. Involved in phytocassane phytoalexins biosynthesis. Catalyzes the conversion of ent-copalyl diphosphate to the phytoalexin precursor ent-cassa-12,15-diene. This chain is Ent-cassa-12,15-diene synthase (KSL7), found in Oryza sativa subsp. indica (Rice).